The chain runs to 369 residues: 3-dehydroquinate synthase (369 aa).

NAD(+) is bound by residues D70–K75, G104–D108, T128–T129, K141, K150, and T168–T171. Zn(2+) is bound by residues E183, H246, and H262.

This sequence belongs to the sugar phosphate cyclases superfamily. Dehydroquinate synthase family. It depends on Co(2+) as a cofactor. The cofactor is Zn(2+). Requires NAD(+) as cofactor.

It is found in the cytoplasm. It carries out the reaction 7-phospho-2-dehydro-3-deoxy-D-arabino-heptonate = 3-dehydroquinate + phosphate. The protein operates within metabolic intermediate biosynthesis; chorismate biosynthesis; chorismate from D-erythrose 4-phosphate and phosphoenolpyruvate: step 2/7. Its function is as follows. Catalyzes the conversion of 3-deoxy-D-arabino-heptulosonate 7-phosphate (DAHP) to dehydroquinate (DHQ). This chain is 3-dehydroquinate synthase, found in Rhodococcus erythropolis (strain PR4 / NBRC 100887).